The following is a 425-amino-acid chain: Enolase (425 aa).

Glutamine 162 is a binding site for (2R)-2-phosphoglycerate. The Proton donor role is filled by glutamate 204. Positions 241, 288, and 315 each coordinate Mg(2+). Residues lysine 340, arginine 369, serine 370, and lysine 391 each coordinate (2R)-2-phosphoglycerate. The active-site Proton acceptor is lysine 340.

The protein belongs to the enolase family. The cofactor is Mg(2+).

The protein localises to the cytoplasm. It is found in the secreted. The protein resides in the cell surface. The catalysed reaction is (2R)-2-phosphoglycerate = phosphoenolpyruvate + H2O. It functions in the pathway carbohydrate degradation; glycolysis; pyruvate from D-glyceraldehyde 3-phosphate: step 4/5. Functionally, catalyzes the reversible conversion of 2-phosphoglycerate (2-PG) into phosphoenolpyruvate (PEP). It is essential for the degradation of carbohydrates via glycolysis. The protein is Enolase of Porphyromonas gingivalis (strain ATCC 33277 / DSM 20709 / CIP 103683 / JCM 12257 / NCTC 11834 / 2561).